The following is a 347-amino-acid chain: MSATSIQPLLDILFQGKALTREQTASLFSTLIQGEMNEAVMAGMLMALKIRGETIAEISGAADAMRAAAKPFPYPSSKRTEGIIDIVGTGGDGFNTINISTTAAFVAAAAGAKVAKHGNRSVSSKSGSSDLLAQFGIDLTMSPELASRCLESLNLCFLFAPHYHGGVKHAVPVRQALKTRTLFNVLGPLINPARPEFMLLGVYSPELVTPIARVLQALGTQRAMVVHGSGLDEVALHGSTQVAELKDGEIIEYQLTPADFGVPQAQISELEGGEPAQNAQITQSILQGQGSDAHTHAVAINAGCALYLCGLSDSVKAGTALALNTIKSGKAFELLNQLAKVSSETQE.

5-phospho-alpha-D-ribose 1-diphosphate-binding positions include glycine 88, 91 to 92 (GD), threonine 96, 98 to 101 (NIST), 116 to 124 (KHGNRSVSS), and serine 128. Glycine 88 contributes to the anthranilate binding site. Serine 100 contributes to the Mg(2+) binding site. Asparagine 119 contributes to the anthranilate binding site. Residue arginine 174 participates in anthranilate binding. Residues aspartate 232 and glutamate 233 each contribute to the Mg(2+) site.

This sequence belongs to the anthranilate phosphoribosyltransferase family. In terms of assembly, homodimer. Mg(2+) is required as a cofactor.

The enzyme catalyses N-(5-phospho-beta-D-ribosyl)anthranilate + diphosphate = 5-phospho-alpha-D-ribose 1-diphosphate + anthranilate. It functions in the pathway amino-acid biosynthesis; L-tryptophan biosynthesis; L-tryptophan from chorismate: step 2/5. In terms of biological role, catalyzes the transfer of the phosphoribosyl group of 5-phosphorylribose-1-pyrophosphate (PRPP) to anthranilate to yield N-(5'-phosphoribosyl)-anthranilate (PRA). This Shewanella sp. (strain MR-7) protein is Anthranilate phosphoribosyltransferase.